We begin with the raw amino-acid sequence, 314 residues long: Ribosomal protein uL3 glutamine methyltransferase (314 aa).

This sequence belongs to the protein N5-glutamine methyltransferase family. PrmB subfamily.

It catalyses the reaction L-glutaminyl-[ribosomal protein uL3] + S-adenosyl-L-methionine = N(5)-methyl-L-glutaminyl-[ribosomal protein uL3] + S-adenosyl-L-homocysteine + H(+). In terms of biological role, methylates large ribosomal subunit protein uL3 on a specific glutamine residue. This is Ribosomal protein uL3 glutamine methyltransferase from Haemophilus influenzae (strain ATCC 51907 / DSM 11121 / KW20 / Rd).